A 500-amino-acid polypeptide reads, in one-letter code: Prostacyclin synthase (500 aa).

Residues 1-20 traverse the membrane as a helical segment; that stretch reads MAWAALLGLLAALLLLLLLS. Residues Arg106, Leu112, Asn287, 358–359, and Arg382 each bind substrate; that span reads TR. Position 441 (Cys441) interacts with heme.

This sequence belongs to the cytochrome P450 family. It depends on heme as a cofactor. Widely expressed; particularly abundant in ovary, heart, skeletal muscle, lung and prostate.

It localises to the endoplasmic reticulum membrane. The enzyme catalyses prostaglandin H2 = prostaglandin I2. It carries out the reaction a hydroperoxyeicosatetraenoate = an oxoeicosatetraenoate + H2O. It catalyses the reaction (15S)-hydroperoxy-(5Z,8Z,11Z,13E)-eicosatetraenoate = 15-oxo-(5Z,8Z,11Z,13E)-eicosatetraenoate + H2O. The catalysed reaction is (15S)-hydroperoxy-(5Z,8Z,11Z,13E)-eicosatetraenoate + AH2 = (15S)-hydroxy-(5Z,8Z,11Z,13E)-eicosatetraenoate + A + H2O. Its function is as follows. Catalyzes the biosynthesis and metabolism of eicosanoids. Catalyzes the isomerization of prostaglandin H2 to prostacyclin (= prostaglandin I2), a potent mediator of vasodilation and inhibitor of platelet aggregation. Additionally, displays dehydratase activity, toward hydroperoxyeicosatetraenoates (HPETEs), especially toward (15S)-hydroperoxy-(5Z,8Z,11Z,13E)-eicosatetraenoate (15(S)-HPETE). The polypeptide is Prostacyclin synthase (PTGIS) (Homo sapiens (Human)).